The chain runs to 56 residues: Large ribosomal subunit protein bL33 (56 aa).

The protein belongs to the bacterial ribosomal protein bL33 family.

The polypeptide is Large ribosomal subunit protein bL33 (Ehrlichia ruminantium (strain Gardel)).